The following is a 504-amino-acid chain: uncharacterized protein (504 aa).

Positions 431-483 are disordered; it reads GEAEKYRKLQDGDEDEEGTGKPEPKKARRKGFGGKFAPKHEEKVTRAVGVNSE.

This sequence belongs to the CBF/MAK21 family.

This is an uncharacterized protein from Caenorhabditis elegans.